The sequence spans 221 residues: Crossover junction endodeoxyribonuclease RuvC (221 aa).

Catalysis depends on residues Asp-12, Glu-73, and Asp-146. Asp-12, Glu-73, and Asp-146 together coordinate Mg(2+). A disordered region spans residues 169–221 (SQYSEQELEKRRRVQQGKLGKAKSTYNAEQAQSHASDPAKAAHPSQFQRTDTN). Residues 192–203 (STYNAEQAQSHA) show a composition bias toward polar residues.

The protein belongs to the RuvC family. In terms of assembly, homodimer which binds Holliday junction (HJ) DNA. The HJ becomes 2-fold symmetrical on binding to RuvC with unstacked arms; it has a different conformation from HJ DNA in complex with RuvA. In the full resolvosome a probable DNA-RuvA(4)-RuvB(12)-RuvC(2) complex forms which resolves the HJ. It depends on Mg(2+) as a cofactor.

The protein localises to the cytoplasm. The enzyme catalyses Endonucleolytic cleavage at a junction such as a reciprocal single-stranded crossover between two homologous DNA duplexes (Holliday junction).. The RuvA-RuvB-RuvC complex processes Holliday junction (HJ) DNA during genetic recombination and DNA repair. Endonuclease that resolves HJ intermediates. Cleaves cruciform DNA by making single-stranded nicks across the HJ at symmetrical positions within the homologous arms, yielding a 5'-phosphate and a 3'-hydroxyl group; requires a central core of homology in the junction. The consensus cleavage sequence is 5'-(A/T)TT(C/G)-3'. Cleavage occurs on the 3'-side of the TT dinucleotide at the point of strand exchange. HJ branch migration catalyzed by RuvA-RuvB allows RuvC to scan DNA until it finds its consensus sequence, where it cleaves and resolves the cruciform DNA. The sequence is that of Crossover junction endodeoxyribonuclease RuvC from Corynebacterium glutamicum (strain ATCC 13032 / DSM 20300 / JCM 1318 / BCRC 11384 / CCUG 27702 / LMG 3730 / NBRC 12168 / NCIMB 10025 / NRRL B-2784 / 534).